We begin with the raw amino-acid sequence, 122 residues long: Holo-[acyl-carrier-protein] synthase (122 aa).

Positions 9 and 58 each coordinate Mg(2+).

This sequence belongs to the P-Pant transferase superfamily. AcpS family. It depends on Mg(2+) as a cofactor.

The protein resides in the cytoplasm. It carries out the reaction apo-[ACP] + CoA = holo-[ACP] + adenosine 3',5'-bisphosphate + H(+). Its function is as follows. Transfers the 4'-phosphopantetheine moiety from coenzyme A to a Ser of acyl-carrier-protein. The protein is Holo-[acyl-carrier-protein] synthase of Chlamydia felis (strain Fe/C-56) (Chlamydophila felis).